The following is a 212-amino-acid chain: High frequency lysogenization protein HflD homolog (212 aa).

The protein belongs to the HflD family.

The protein resides in the cytoplasm. Its subcellular location is the cell inner membrane. This Pectobacterium carotovorum subsp. carotovorum (strain PC1) protein is High frequency lysogenization protein HflD homolog.